The following is a 666-amino-acid chain: Adenylylsulfate reductase subunit alpha (666 aa).

FAD-binding positions include 32-35, 60-61, 67-69, N78, I193, S259, S417, 461-462, and S472; these read GGMG, DK, SGA, and AD.

Belongs to the FAD-dependent oxidoreductase 2 family. Heterodimer composed of AprA and AprB. The heterodimers can dimerize to form heterotetramers. FAD is required as a cofactor.

It is found in the cytoplasm. It carries out the reaction sulfite + A + AMP + 2 H(+) = adenosine 5'-phosphosulfate + AH2. Catalytic subunit of the adenylylsulfate reductase which catalyzes reversibly the reduction of adenosine 5'-phosphosulfate (APS) to sulfite and AMP during dissimilatory sulfate reduction. The sequence is that of Adenylylsulfate reductase subunit alpha from Megalodesulfovibrio gigas (strain ATCC 19364 / DSM 1382 / NCIMB 9332 / VKM B-1759) (Desulfovibrio gigas).